Consider the following 56-residue polypeptide: Large ribosomal subunit protein bL33 (56 aa).

It belongs to the bacterial ribosomal protein bL33 family.

In Ehrlichia canis (strain Jake), this protein is Large ribosomal subunit protein bL33.